Consider the following 339-residue polypeptide: Anthranilate phosphoribosyltransferase (339 aa).

Residues Gly79, 82 to 83 (GD), Ser87, 89 to 92 (NIST), 107 to 115 (KHGNRSISS), and Ser119 each bind 5-phospho-alpha-D-ribose 1-diphosphate. Position 79 (Gly79) interacts with anthranilate. Ser91 provides a ligand contact to Mg(2+). Asn110 contributes to the anthranilate binding site. Position 165 (Arg165) interacts with anthranilate. Mg(2+) contacts are provided by Asp224 and Glu225.

Belongs to the anthranilate phosphoribosyltransferase family. Homodimer. Mg(2+) serves as cofactor.

The catalysed reaction is N-(5-phospho-beta-D-ribosyl)anthranilate + diphosphate = 5-phospho-alpha-D-ribose 1-diphosphate + anthranilate. It functions in the pathway amino-acid biosynthesis; L-tryptophan biosynthesis; L-tryptophan from chorismate: step 2/5. Catalyzes the transfer of the phosphoribosyl group of 5-phosphorylribose-1-pyrophosphate (PRPP) to anthranilate to yield N-(5'-phosphoribosyl)-anthranilate (PRA). In Listeria monocytogenes serotype 4b (strain CLIP80459), this protein is Anthranilate phosphoribosyltransferase.